The primary structure comprises 140 residues: NTF2-related export protein 1 (140 aa).

Residue alanine 2 is modified to N-acetylalanine. One can recognise an NTF2 domain in the interval 16–135 (AAEEFVNVYY…WKIASDCFRF (120 aa)).

As to quaternary structure, heterodimer with NXF1. Forms a complex with RANGAP1, RANBP2/NUP358 and NXF1. Interacts (via NTF2 domain) with NXF1. Stabilizes the NTF2 domain of NXF1 by heterodimerization. The formation of NXF1-NXT1 heterodimers is required for the NXF1-mediated nuclear mRNA export. Preferentially binds Ran-GTP. Associates with NXF2, NXF3 and NXF5. Does not bind nucleoporins (NPC) directly, its association to NPC is mediated by NXF1.

It is found in the nucleus. Its subcellular location is the nucleus speckle. The protein resides in the cytoplasm. Functionally, stimulator of protein export for NES-containing proteins. Also plays a role in the nuclear export of U1 snRNA, tRNA, and mRNA. The NXF1-NXT1 heterodimer is involved in the export of HSP70 mRNA in conjunction with ALYREF/THOC4 and THOC5. This chain is NTF2-related export protein 1 (NXT1), found in Bos taurus (Bovine).